A 492-amino-acid chain; its full sequence is MQSNTDSSTSGTYSQTVGLLYVFNLIVGTGALALPKAFQTAGWLLSITLLTFSAFMSYVAATFVIEALSVANAVLSKKRRVEYDDVVVADGPSTFEISKKVEVSEMASMFLSKVSLVFSYFAIIIYLFGDLAIYSTTVPKSAMNIVCATINASTVKSSDPCHESWPEILTRMTVYRFFVIIFVVVVCLPMVIAGITKTRHIQIMTTLSRWAAFILMISLATMQLSSDGAAAHPPAYNFHGFGSLFGCAVYAFMCHHSIPSLITPMRTKDNVFGKIALVYGVVGVFYFTLSLTGAFAFEHVQDIYTLNFFHDGNTSFIYSIIDYFLALFPIITLTSSYPIIALTLINNFNVVKDILCPKVGQENESLLEADSLVEDNDTDDEREARNARNEKSVFDVLVPALVLALPTFLSLLTDDMLLLASITGSFPGVAVQFAIPCLLVTAARKHARSVLNFPVPRKNNSPFQSPIWIVLISSWAGFSMIMVLLNLVGVKF.

The Cytoplasmic portion of the chain corresponds to 1 to 17 (MQSNTDSSTSGTYSQTV). A helical membrane pass occupies residues 18–38 (GLLYVFNLIVGTGALALPKAF). Residues 39 to 44 (QTAGWL) are Extracellular-facing. The chain crosses the membrane as a helical span at residues 45-65 (LSITLLTFSAFMSYVAATFVI). Residues 66–113 (EALSVANAVLSKKRRVEYDDVVVADGPSTFEISKKVEVSEMASMFLSK) are Cytoplasmic-facing. Residues 114–134 (VSLVFSYFAIIIYLFGDLAIY) traverse the membrane as a helical segment. Residues 135–176 (STTVPKSAMNIVCATINASTVKSSDPCHESWPEILTRMTVYR) lie on the Extracellular side of the membrane. The N-linked (GlcNAc...) asparagine glycan is linked to asparagine 151. A helical membrane pass occupies residues 177-197 (FFVIIFVVVVCLPMVIAGITK). The Cytoplasmic segment spans residues 198-209 (TRHIQIMTTLSR). The chain crosses the membrane as a helical span at residues 210–230 (WAAFILMISLATMQLSSDGAA). Residues 231 to 237 (AHPPAYN) are Extracellular-facing. A helical membrane pass occupies residues 238-258 (FHGFGSLFGCAVYAFMCHHSI). The Cytoplasmic portion of the chain corresponds to 259-274 (PSLITPMRTKDNVFGK). A helical transmembrane segment spans residues 275 to 295 (IALVYGVVGVFYFTLSLTGAF). At 296–324 (AFEHVQDIYTLNFFHDGNTSFIYSIIDYF) the chain is on the extracellular side. N-linked (GlcNAc...) asparagine glycosylation is present at asparagine 313. The chain crosses the membrane as a helical span at residues 325-345 (LALFPIITLTSSYPIIALTLI). Residues 346 to 392 (NNFNVVKDILCPKVGQENESLLEADSLVEDNDTDDEREARNARNEKS) are Cytoplasmic-facing. The helical transmembrane segment at 393–413 (VFDVLVPALVLALPTFLSLLT) threads the bilayer. Topologically, residues 414 to 415 (DD) are extracellular. Residues 416–436 (MLLLASITGSFPGVAVQFAIP) form a helical membrane-spanning segment. Topologically, residues 437–466 (CLLVTAARKHARSVLNFPVPRKNNSPFQSP) are cytoplasmic. A helical transmembrane segment spans residues 467–487 (IWIVLISSWAGFSMIMVLLNL). The Extracellular segment spans residues 488-492 (VGVKF).

Belongs to the TMEM104 family.

Its subcellular location is the membrane. The chain is Transmembrane protein 104 homolog from Caenorhabditis elegans.